Here is a 375-residue protein sequence, read N- to C-terminus: DnaJ homolog subfamily B member 12 (375 aa).

An N-acetylmethionine modification is found at methionine 1. Topologically, residues 1–243 (MESNKDEAER…DRRDNQGDGG (243 aa)) are cytoplasmic. A disordered region spans residues 45-92 (ALIESLNQKPQTAGDQPPPTDTTHATHRKAGGTDAPSANGEAGGESTK). Positions 49–58 (SLNQKPQTAG) are enriched in polar residues. Positions 112 to 176 (YEILGVSRGA…RKQYDQFGDD (65 aa)) constitute a J domain. Histidine 185 carries the post-translational modification Pros-methylhistidine. A helical membrane pass occupies residues 244–264 (LGVFVQLMPILILILVSALSQ). The Lumenal portion of the chain corresponds to 265–375 (LMVSSPPYSL…LSEVQASLHG (111 aa)).

This sequence belongs to the DnaJ family. DNAJB12/DNAJB14 subfamily. Homodimer and homotetramer. Interacts (via J domain) with HSPA8/Hsc70. Forms a multiprotein complex, at least composed of DNAJB12, DNAJB14, HSPA8/Hsc70 and SGTA; interaction with DNAJB14 and HSPA8/Hsc70 is direct. Post-translationally, methylated at His-185 by METTL9.

It is found in the endoplasmic reticulum membrane. It localises to the nucleus membrane. Its function is as follows. Acts as a co-chaperone with HSPA8/Hsc70; required to promote protein folding and trafficking, prevent aggregation of client proteins, and promote unfolded proteins to endoplasmic reticulum-associated degradation (ERAD) pathway. Acts by determining HSPA8/Hsc70's ATPase and polypeptide-binding activities. Can also act independently of HSPA8/Hsc70: together with DNAJB14, acts as a chaperone that promotes maturation of potassium channels KCND2 and KCNH2 by stabilizing nascent channel subunits and assembling them into tetramers. While stabilization of nascent channel proteins is dependent on HSPA8/Hsc70, the process of oligomerization of channel subunits is independent of HSPA8/Hsc70. When overexpressed, forms membranous structures together with DNAJB14 and HSPA8/Hsc70 within the nucleus; the role of these structures, named DJANGOs, is still unclear. In terms of biological role, (Microbial infection) In case of infection by polyomavirus, involved in the virus endoplasmic reticulum membrane penetration and infection. This is DnaJ homolog subfamily B member 12 from Homo sapiens (Human).